Consider the following 275-residue polypeptide: Putative phosphoenolpyruvate synthase regulatory protein (275 aa).

153–160 (GVSRSGKT) serves as a coordination point for ADP.

It belongs to the pyruvate, phosphate/water dikinase regulatory protein family. PSRP subfamily.

The enzyme catalyses [pyruvate, water dikinase] + ADP = [pyruvate, water dikinase]-phosphate + AMP + H(+). It carries out the reaction [pyruvate, water dikinase]-phosphate + phosphate + H(+) = [pyruvate, water dikinase] + diphosphate. Bifunctional serine/threonine kinase and phosphorylase involved in the regulation of the phosphoenolpyruvate synthase (PEPS) by catalyzing its phosphorylation/dephosphorylation. The chain is Putative phosphoenolpyruvate synthase regulatory protein from Nitrosomonas eutropha (strain DSM 101675 / C91 / Nm57).